Reading from the N-terminus, the 425-residue chain is Pleckstrin homology domain-containing family A member 2 (425 aa).

The PH 1 domain maps to 7 to 113 (QNRICGFLDI…WVEALNQASK (107 aa)). Lys141 is covalently cross-linked (Glycyl lysine isopeptide (Lys-Gly) (interchain with G-Cter in SUMO2)). Ser184 bears the Phosphoserine mark. The 101-residue stretch at 198–298 (PLIKSGYCVK…WIKEIGAAVQ (101 aa)) folds into the PH 2 domain. Phosphoserine occurs at positions 314 and 349. Positions 374–410 (AEDSLFTPRLGESSTSAVLPSSRIRHRSEPQHPKEKP) are disordered. Residues 400 to 410 (RSEPQHPKEKP) are compositionally biased toward basic and acidic residues.

As to quaternary structure, binds MPDZ and PTPN13.

It is found in the cytoplasm. The protein localises to the cell membrane. Its subcellular location is the nucleus. Binds specifically to phosphatidylinositol 3,4-diphosphate (PtdIns3,4P2), but not to other phosphoinositides. May recruit other proteins to the plasma membrane. This chain is Pleckstrin homology domain-containing family A member 2 (PLEKHA2), found in Bos taurus (Bovine).